A 95-amino-acid chain; its full sequence is Protein RnfH (95 aa).

This sequence belongs to the UPF0125 (RnfH) family.

The polypeptide is Protein RnfH (Erwinia tasmaniensis (strain DSM 17950 / CFBP 7177 / CIP 109463 / NCPPB 4357 / Et1/99)).